A 261-amino-acid polypeptide reads, in one-letter code: Phosphatidylglycerol--prolipoprotein diacylglyceryl transferase (261 aa).

The next 7 membrane-spanning stretches (helical) occupy residues 19–39 (VHWY…LALY), 56–76 (LIFY…MLFY), 92–112 (WRGG…TWIF), 126–146 (FVVP…FING), 173–193 (QLYE…WFSA), 199–219 (FAVS…AEFF), and 227–247 (GFVA…MIII). R139 serves as a coordination point for a 1,2-diacyl-sn-glycero-3-phospho-(1'-sn-glycerol).

Belongs to the Lgt family.

Its subcellular location is the cell inner membrane. The enzyme catalyses L-cysteinyl-[prolipoprotein] + a 1,2-diacyl-sn-glycero-3-phospho-(1'-sn-glycerol) = an S-1,2-diacyl-sn-glyceryl-L-cysteinyl-[prolipoprotein] + sn-glycerol 1-phosphate + H(+). It functions in the pathway protein modification; lipoprotein biosynthesis (diacylglyceryl transfer). Its function is as follows. Catalyzes the transfer of the diacylglyceryl group from phosphatidylglycerol to the sulfhydryl group of the N-terminal cysteine of a prolipoprotein, the first step in the formation of mature lipoproteins. This Coxiella burnetii (strain Dugway 5J108-111) protein is Phosphatidylglycerol--prolipoprotein diacylglyceryl transferase.